A 200-amino-acid chain; its full sequence is Recombination protein RecR (200 aa).

The segment at 58 to 75 (CSNCFCLKISQTSPCNFC) adopts a C4-type zinc-finger fold. A Toprim domain is found at 82 to 177 (SSLCIVATPK…KISRLALGMP (96 aa)).

It belongs to the RecR family.

In terms of biological role, may play a role in DNA repair. It seems to be involved in an RecBC-independent recombinational process of DNA repair. It may act with RecF and RecO. This Chlamydia trachomatis serovar L2 (strain ATCC VR-902B / DSM 19102 / 434/Bu) protein is Recombination protein RecR.